The sequence spans 343 residues: Palmitoyltransferase ZDHHC4 (343 aa).

Residues 1–2 (MD) lie on the Lumenal side of the membrane. A helical transmembrane segment spans residues 3–23 (FLVLFLFYLAFLLICVVLICI). Residues 24-67 (FTKSQRLKAVVLGGAQVCSRVIPQCLQRAVQTLLHQLFHTRHPT) lie on the Cytoplasmic side of the membrane. A helical membrane pass occupies residues 68–88 (FIVLHLLLQGLVYAEYTCEVF). The Lumenal segment spans residues 89–100 (GYCRELEFSLPY). A helical transmembrane segment spans residues 101-121 (LLLPYVLLSVNLVFFTLTCAA). Residues 122 to 193 (NPGTITKANE…NCIGAWNTRY (72 aa)) are Cytoplasmic-facing. Residues 149–199 (SRCPTCDLRKPARSKHCRLCDRCVHRFDHHCVWVNNCIGAWNTRYFLIYLL) form the DHHC domain. Cysteine 179 functions as the S-palmitoyl cysteine intermediate in the catalytic mechanism. The helical transmembrane segment at 194 to 214 (FLIYLLTLTASAATIATVTAA) threads the bilayer. The Lumenal segment spans residues 215-255 (FLLRLVTVSDLYQETYLDDVGHFQAVDTVFLIQHLFLAFPR). A helical transmembrane segment spans residues 256 to 276 (IVFLLGFVIVLSMLLAGYLCF). At 277-343 (ALYLAATNQT…ATPSYKKKEK (67 aa)) the chain is on the cytoplasmic side. A Di-lysine motif motif is present at residues 340–343 (KKEK).

The protein belongs to the DHHC palmitoyltransferase family. As to quaternary structure, interacts with CPT1A.

It is found in the endoplasmic reticulum membrane. It localises to the golgi apparatus membrane. The protein resides in the cell membrane. The enzyme catalyses L-cysteinyl-[protein] + hexadecanoyl-CoA = S-hexadecanoyl-L-cysteinyl-[protein] + CoA. Functionally, palmitoyltransferase that could catalyze the addition of palmitate onto protein substrates including the D(2) dopamine receptor DRD2, GSK3B or MAVS. Mediates GSK3B palmitoylation to prevent its AKT1-mediated phosphorylation leading to activation of the STAT3 signaling pathway. Also catalyzes MAVS palmitoylation which promotes its stabilization and activation by inhibiting 'Lys-48'- but facilitating 'Lys-63'-linked ubiquitination. This Mus musculus (Mouse) protein is Palmitoyltransferase ZDHHC4.